The sequence spans 350 residues: Farnesyl pyrophosphate synthase (350 aa).

The isopentenyl diphosphate site is built by Lys55, Arg58, and Gln94. Residues Asp101 and Asp105 each coordinate Mg(2+). Dimethylallyl diphosphate is bound at residue Arg110. An isopentenyl diphosphate-binding site is contributed by Arg111. Dimethylallyl diphosphate-binding residues include Lys198, Thr199, Gln237, Lys254, and Lys263.

This sequence belongs to the FPP/GGPP synthase family. It depends on Mg(2+) as a cofactor.

The protein localises to the cytoplasm. It carries out the reaction isopentenyl diphosphate + dimethylallyl diphosphate = (2E)-geranyl diphosphate + diphosphate. The catalysed reaction is isopentenyl diphosphate + (2E)-geranyl diphosphate = (2E,6E)-farnesyl diphosphate + diphosphate. The protein operates within isoprenoid biosynthesis; farnesyl diphosphate biosynthesis; farnesyl diphosphate from geranyl diphosphate and isopentenyl diphosphate: step 1/1. Its pathway is isoprenoid biosynthesis; geranyl diphosphate biosynthesis; geranyl diphosphate from dimethylallyl diphosphate and isopentenyl diphosphate: step 1/1. In terms of biological role, catalyzes the sequential condensation of isopentenyl pyrophosphate with the allylic pyrophosphates, dimethylallyl pyrophosphate, and then with the resultant geranylpyrophosphate to the ultimate product farnesyl pyrophosphate. The chain is Farnesyl pyrophosphate synthase (FPS) from Zea mays (Maize).